Reading from the N-terminus, the 256-residue chain is uncharacterized protein (256 aa).

Position 9–33 (9–33 (VTGGGQGIGAAIAQLFAENGMKVVI)) interacts with NADP(+). S140 lines the substrate pocket. The active-site Proton acceptor is Y153.

This sequence belongs to the short-chain dehydrogenases/reductases (SDR) family.

This is an uncharacterized protein from Thermotoga maritima (strain ATCC 43589 / DSM 3109 / JCM 10099 / NBRC 100826 / MSB8).